Consider the following 115-residue polypeptide: C-C motif chemokine 6 (115 aa).

An N-terminal signal peptide occupies residues 1–21; that stretch reads MRHSKTAISFFILVAVLGSQA. Intrachain disulfides connect Cys-49/Cys-72, Cys-50/Cys-88, and Cys-59/Cys-99.

The protein belongs to the intercrine beta (chemokine CC) family.

The protein localises to the secreted. In Rattus norvegicus (Rat), this protein is C-C motif chemokine 6 (Ccl6).